The chain runs to 156 residues: Endoribonuclease YbeY (156 aa).

Residues His-122, His-126, and His-132 each contribute to the Zn(2+) site.

Belongs to the endoribonuclease YbeY family. Zn(2+) is required as a cofactor.

The protein resides in the cytoplasm. Single strand-specific metallo-endoribonuclease involved in late-stage 70S ribosome quality control and in maturation of the 3' terminus of the 16S rRNA. This Bacillus cereus (strain ATCC 14579 / DSM 31 / CCUG 7414 / JCM 2152 / NBRC 15305 / NCIMB 9373 / NCTC 2599 / NRRL B-3711) protein is Endoribonuclease YbeY.